The sequence spans 200 residues: Ribosome maturation factor RimM (200 aa).

The 79-residue stretch at 103–181 (KEGEYYFYQL…KIVAKRLEYL (79 aa)) folds into the PRC barrel domain.

The protein belongs to the RimM family. As to quaternary structure, binds ribosomal protein uS19.

It localises to the cytoplasm. Functionally, an accessory protein needed during the final step in the assembly of 30S ribosomal subunit, possibly for assembly of the head region. Essential for efficient processing of 16S rRNA. May be needed both before and after RbfA during the maturation of 16S rRNA. It has affinity for free ribosomal 30S subunits but not for 70S ribosomes. This chain is Ribosome maturation factor RimM, found in Kosmotoga olearia (strain ATCC BAA-1733 / DSM 21960 / TBF 19.5.1).